Reading from the N-terminus, the 341-residue chain is Protein pelota homolog (341 aa).

This sequence belongs to the eukaryotic release factor 1 family. Pelota subfamily. As to quaternary structure, monomer. The cofactor is a divalent metal cation.

Its subcellular location is the cytoplasm. In terms of biological role, may function in recognizing stalled ribosomes, interact with stem-loop structures in stalled mRNA molecules, and effect endonucleolytic cleavage of the mRNA. May play a role in the release non-functional ribosomes and degradation of damaged mRNAs. Has endoribonuclease activity. This is Protein pelota homolog from Metallosphaera sedula (strain ATCC 51363 / DSM 5348 / JCM 9185 / NBRC 15509 / TH2).